Consider the following 160-residue polypeptide: Endoribonuclease YbeY (160 aa).

Positions 112, 116, and 122 each coordinate Zn(2+).

The protein belongs to the endoribonuclease YbeY family. The cofactor is Zn(2+).

The protein resides in the cytoplasm. Its function is as follows. Single strand-specific metallo-endoribonuclease involved in late-stage 70S ribosome quality control and in maturation of the 3' terminus of the 16S rRNA. The polypeptide is Endoribonuclease YbeY (Maricaulis maris (strain MCS10) (Caulobacter maris)).